The sequence spans 101 residues: MAKVSAVNRNNHRAALVKRDKEKRTALKNIIKDRTLSVEDRFDATLKLAQMPRNGSATRVRLRCKLSGRPRANYRKFELSRIALRDLASAGQIPGMVKSSW.

Belongs to the universal ribosomal protein uS14 family. In terms of assembly, part of the 30S ribosomal subunit. Contacts proteins S3 and S10.

Binds 16S rRNA, required for the assembly of 30S particles and may also be responsible for determining the conformation of the 16S rRNA at the A site. The protein is Small ribosomal subunit protein uS14 of Gluconobacter oxydans (strain 621H) (Gluconobacter suboxydans).